The sequence spans 237 residues: MQENRPVIALDFPEFSDVKDFLEKFDPSEQLYIKLGMELFYTAGPQVVYYVKSLGHSVFLDLKLHDIPNTVESSMHVLARLGVDMVNVHAAGGVEMMVAAKRGLEAGTPVGRQRPKLIAVTQLTSTSEEIMQNDQKIMTSLEESVINYAQKTAQAGLDGVVCSAHEVEKIKAATSKEFICLTPGIRPEGASKGDQKRVMTPKEARTIGSDYIVVGRPITQAKDPVASYHAIKAEWNR.

Substrate contacts are provided by residues D11, K34, 61 to 70 (DLKLHDIPNT), T124, R186, Q195, G215, and R216. The active-site Proton donor is the K63.

Belongs to the OMP decarboxylase family. Type 1 subfamily. Homodimer.

It carries out the reaction orotidine 5'-phosphate + H(+) = UMP + CO2. It functions in the pathway pyrimidine metabolism; UMP biosynthesis via de novo pathway; UMP from orotate: step 2/2. Functionally, catalyzes the decarboxylation of orotidine 5'-monophosphate (OMP) to uridine 5'-monophosphate (UMP). The polypeptide is Orotidine 5'-phosphate decarboxylase (Lactococcus lactis subsp. lactis (strain IL1403) (Streptococcus lactis)).